Reading from the N-terminus, the 288-residue chain is Pyridoxal kinase PdxY (288 aa).

Residues serine 9 and 44-45 (TQ) each bind substrate. Residues aspartate 111, glutamate 148, and lysine 181 each coordinate ATP. Aspartate 224 is a substrate binding site.

This sequence belongs to the pyridoxine kinase family. PdxY subfamily. Homodimer. Mg(2+) is required as a cofactor.

The catalysed reaction is pyridoxal + ATP = pyridoxal 5'-phosphate + ADP + H(+). It functions in the pathway cofactor metabolism; pyridoxal 5'-phosphate salvage; pyridoxal 5'-phosphate from pyridoxal: step 1/1. Its function is as follows. Pyridoxal kinase involved in the salvage pathway of pyridoxal 5'-phosphate (PLP). Catalyzes the phosphorylation of pyridoxal to PLP. The polypeptide is Pyridoxal kinase PdxY (Haemophilus influenzae (strain ATCC 51907 / DSM 11121 / KW20 / Rd)).